Reading from the N-terminus, the 149-residue chain is Protein RhiC (149 aa).

The N-terminal stretch at 1–23 (MTATLRAFGWLAAFALTVTFAQG) is a signal peptide.

The protein resides in the periplasm. Its function is as follows. May be involved in plant-microbe interaction. The chain is Protein RhiC (rhiC) from Rhizobium leguminosarum bv. viciae.